Here is a 378-residue protein sequence, read N- to C-terminus: 4-hydroxy-3-methylbut-2-en-1-yl diphosphate synthase (flavodoxin) (378 aa).

Cysteine 268, cysteine 271, cysteine 303, and glutamate 310 together coordinate [4Fe-4S] cluster.

This sequence belongs to the IspG family. [4Fe-4S] cluster is required as a cofactor.

The enzyme catalyses (2E)-4-hydroxy-3-methylbut-2-enyl diphosphate + oxidized [flavodoxin] + H2O + 2 H(+) = 2-C-methyl-D-erythritol 2,4-cyclic diphosphate + reduced [flavodoxin]. It participates in isoprenoid biosynthesis; isopentenyl diphosphate biosynthesis via DXP pathway; isopentenyl diphosphate from 1-deoxy-D-xylulose 5-phosphate: step 5/6. Its function is as follows. Converts 2C-methyl-D-erythritol 2,4-cyclodiphosphate (ME-2,4cPP) into 1-hydroxy-2-methyl-2-(E)-butenyl 4-diphosphate. This Corynebacterium glutamicum (strain ATCC 13032 / DSM 20300 / JCM 1318 / BCRC 11384 / CCUG 27702 / LMG 3730 / NBRC 12168 / NCIMB 10025 / NRRL B-2784 / 534) protein is 4-hydroxy-3-methylbut-2-en-1-yl diphosphate synthase (flavodoxin).